Here is a 359-residue protein sequence, read N- to C-terminus: Histidinol-phosphate aminotransferase (359 aa).

Residue Lys-220 is modified to N6-(pyridoxal phosphate)lysine.

This sequence belongs to the class-II pyridoxal-phosphate-dependent aminotransferase family. Histidinol-phosphate aminotransferase subfamily. Homodimer. Pyridoxal 5'-phosphate serves as cofactor.

The enzyme catalyses L-histidinol phosphate + 2-oxoglutarate = 3-(imidazol-4-yl)-2-oxopropyl phosphate + L-glutamate. The protein operates within amino-acid biosynthesis; L-histidine biosynthesis; L-histidine from 5-phospho-alpha-D-ribose 1-diphosphate: step 7/9. The polypeptide is Histidinol-phosphate aminotransferase (Neisseria gonorrhoeae (strain ATCC 700825 / FA 1090)).